Here is a 70-residue protein sequence, read N- to C-terminus: uncharacterized protein (70 aa).

This is an uncharacterized protein from Saccharomyces cerevisiae (strain ATCC 204508 / S288c) (Baker's yeast).